A 567-amino-acid polypeptide reads, in one-letter code: Urease subunit alpha (567 aa).

The 439-residue stretch at 129–567 folds into the Urease domain; sequence GGIDSHIHFI…LPMAQRYFLF (439 aa). Residues H134, H136, and K217 each contribute to the Ni(2+) site. K217 is modified (N6-carboxylysine). H219 provides a ligand contact to substrate. Residues H246 and H272 each coordinate Ni(2+). The active-site Proton donor is H320. Residue D360 coordinates Ni(2+).

The protein belongs to the metallo-dependent hydrolases superfamily. Urease alpha subunit family. In terms of assembly, heterotrimer of UreA (gamma), UreB (beta) and UreC (alpha) subunits. Three heterotrimers associate to form the active enzyme. The cofactor is Ni cation. Post-translationally, carboxylation allows a single lysine to coordinate two nickel ions.

The protein localises to the cytoplasm. The catalysed reaction is urea + 2 H2O + H(+) = hydrogencarbonate + 2 NH4(+). The protein operates within nitrogen metabolism; urea degradation; CO(2) and NH(3) from urea (urease route): step 1/1. The protein is Urease subunit alpha of Tolumonas auensis (strain DSM 9187 / NBRC 110442 / TA 4).